A 405-amino-acid polypeptide reads, in one-letter code: MATYTCITCRVAFKDADIQRAHYKTDWHRYNLKRKVADMPPVTAENFQERVLAQRAVAEERDKVTATYCTVCSKRFSTFNAYENHLKSKKHLELEKKAVQAVSKKVKILNEKNLEKGLAVESVDKDEMNAAIQQAIRAQPSSSPKKVPLPPSHASSSPVPMESAGLLQSKERTQKPPRLQWFEQQAKKLAKQEAEEEEDSEEGWEEMDSDEDLGSEEEMEGVEEEEEKQAEAESTCAIGAIPVTDCLFCSHHSRTLMKNVAHMTKVHSFFIPDIEYLVDLRGLIKYLGEKIGVGKICIWCNEKGKSFYSTEAVQAHMNDKSHCKLFTDGDAALEFADFYDFRSSYPDHKEGQDMEVPAELPSDRELEYDDDTMELIPPFRCKSWSSFFNEILQAAVWSVKNGGCY.

2 consecutive U1-type zinc fingers follow at residues 4–28 (YTCITCRVAFKDADIQRAHYKTDWH) and 67–91 (TYCTVCSKRFSTFNAYENHLKSKKH). Residues 135–230 (AIRAQPSSSP…GVEEEEEKQA (96 aa)) are disordered. A compositionally biased stretch (acidic residues) spans 194-228 (AEEEEDSEEGWEEMDSDEDLGSEEEMEGVEEEEEK).

This sequence belongs to the REI1 family. Homo- and heterodimer. Associates with pre-60S ribosomal particles. As to expression, mainly expressed in the ovary. Mainly expressed in the testis.

It is found in the cytoplasm. It localises to the nucleus. In terms of biological role, pre-60S-associated cytoplasmic factor involved in the cytoplasmic maturation of the 60S subunit. The sequence is that of Cytoplasmic 60S subunit biogenesis factor ZNF622 (ZNF622) from Gallus gallus (Chicken).